The chain runs to 554 residues: Guanine nucleotide-binding protein alpha-2 subunit (554 aa).

Disordered regions lie at residues 1–139 (MGLC…NNSN) and 157–183 (VNGN…THSG). G2 carries N-myristoyl glycine lipidation. C4 carries the S-palmitoyl cysteine lipid modification. Basic and acidic residues-rich tracts occupy residues 7 to 17 (KDSRESTHDGG) and 28 to 43 (ANRR…DKKQ). A compositionally biased stretch (low complexity) spans 52-66 (GSIVNAASNINNSSS). Over residues 67 to 85 (GKTKISTVSEDGTVSNGVG) the composition is skewed to polar residues. Positions 91 to 139 (DNANNKNNGNNNNSNNNDNNNNNNNNIGNNINGNNNNDSENIHDSNNSN) are enriched in low complexity. One can recognise a G-alpha domain in the interval 228-554 (NALKVLLLGS…ENSLKDSGVL (327 aa)). The interval 231–244 (KVLLLGSGESGKST) is G1 motif. E239, S240, G241, K242, S243, T244, D351, I376, T382, G405, N471, K472, D474, and A526 together coordinate GTP. S243 provides a ligand contact to Mg(2+). The tract at residues 374–382 (DVIRTRKKT) is G2 motif. T382 contacts Mg(2+). The G3 motif stretch occupies residues 398 to 407 (LHFFDVGGQR). Residues 467 to 474 (VLFLNKID) are G4 motif. The tract at residues 524–529 (TQATDT) is G5 motif.

The protein belongs to the G-alpha family. As to quaternary structure, g proteins are composed of 3 units; alpha, beta and gamma. The alpha chain contains the guanine nucleotide binding site. It depends on Mg(2+) as a cofactor.

Guanine nucleotide-binding proteins (G proteins) are involved as modulators or transducers in various transmembrane signaling systems. This protein may be involved in the determination of the cAMP level according to nutritional conditions, most probably as a regulator of adenylyl cyclase. The protein is Guanine nucleotide-binding protein alpha-2 subunit (GPA2) of Kluyveromyces lactis (strain ATCC 8585 / CBS 2359 / DSM 70799 / NBRC 1267 / NRRL Y-1140 / WM37) (Yeast).